The chain runs to 333 residues: EP300-interacting inhibitor of differentiation 3 (333 aa).

The protein belongs to the NSE4 family. In terms of assembly, component of the SMC5-SMC6 complex which consists at least of SMC5, SMC6, NSMCE2, NSMCE1, NSMCE4A or EID3 and NSMCE3; EID3 seems to be a testis-specific subunit. NSMCE1, NSMCE4A or EID3 and NSMCE3 probably form a subcomplex that bridges the head domains of the SMC5:SMC6 heterodimer. Homodimer, and heterodimer with EID2. Interacts with the C-terminal region of CREBBP. As to expression, highly expressed in testis.

Its subcellular location is the nucleus. It is found in the cytoplasm. It localises to the chromosome. The protein localises to the telomere. Tissue-specific component of the SMC5-SMC6 complex, a complex involved in repair of DNA double-strand breaks by homologous recombination. The complex may promote sister chromatid homologous recombination by recruiting the SMC1-SMC3 cohesin complex to double-strand breaks. The complex is required for telomere maintenance via recombination and mediates sumoylation of shelterin complex (telosome) components. Functionally, acts as a repressor of nuclear receptor-dependent transcription possibly by interfering with CREBBP-dependent coactivation. May function as a coinhibitor of other CREBBP/EP300-dependent transcription factors. The polypeptide is EP300-interacting inhibitor of differentiation 3 (Homo sapiens (Human)).